The following is a 327-amino-acid chain: Biotin synthase (327 aa).

The Radical SAM core domain occupies 52–279; sequence NAIQRSTLLS…TSWVRLSAGR (228 aa). Positions 67, 71, and 74 each coordinate [4Fe-4S] cluster. [2Fe-2S] cluster contacts are provided by C111, C142, C202, and R274.

The protein belongs to the radical SAM superfamily. Biotin synthase family. In terms of assembly, homodimer. It depends on [4Fe-4S] cluster as a cofactor. The cofactor is [2Fe-2S] cluster.

It carries out the reaction (4R,5S)-dethiobiotin + (sulfur carrier)-SH + 2 reduced [2Fe-2S]-[ferredoxin] + 2 S-adenosyl-L-methionine = (sulfur carrier)-H + biotin + 2 5'-deoxyadenosine + 2 L-methionine + 2 oxidized [2Fe-2S]-[ferredoxin]. It functions in the pathway cofactor biosynthesis; biotin biosynthesis; biotin from 7,8-diaminononanoate: step 2/2. Its function is as follows. Catalyzes the conversion of dethiobiotin (DTB) to biotin by the insertion of a sulfur atom into dethiobiotin via a radical-based mechanism. This Dechloromonas aromatica (strain RCB) protein is Biotin synthase.